Here is a 376-residue protein sequence, read N- to C-terminus: Chaperone protein DnaJ (376 aa).

Residues 5 to 69 (DYYEILGVDR…EKRARYDRFG (65 aa)) form the J domain. The CR-type zinc-finger motif lies at 135–217 (GLETDIRVPH…CNGKGVVRKT (83 aa)). Residues Cys148, Cys151, Cys165, Cys168, Cys191, Cys194, Cys205, and Cys208 each coordinate Zn(2+). 4 CXXCXGXG motif repeats span residues 148–155 (CPVCHGSR), 165–172 (CQTCGGSG), 191–198 (CPDCQGEG), and 205–212 (CSNCNGKG).

It belongs to the DnaJ family. As to quaternary structure, homodimer. Zn(2+) serves as cofactor.

It localises to the cytoplasm. Participates actively in the response to hyperosmotic and heat shock by preventing the aggregation of stress-denatured proteins and by disaggregating proteins, also in an autonomous, DnaK-independent fashion. Unfolded proteins bind initially to DnaJ; upon interaction with the DnaJ-bound protein, DnaK hydrolyzes its bound ATP, resulting in the formation of a stable complex. GrpE releases ADP from DnaK; ATP binding to DnaK triggers the release of the substrate protein, thus completing the reaction cycle. Several rounds of ATP-dependent interactions between DnaJ, DnaK and GrpE are required for fully efficient folding. Also involved, together with DnaK and GrpE, in the DNA replication of plasmids through activation of initiation proteins. In Methanothermobacter thermautotrophicus (strain ATCC 29096 / DSM 1053 / JCM 10044 / NBRC 100330 / Delta H) (Methanobacterium thermoautotrophicum), this protein is Chaperone protein DnaJ.